The primary structure comprises 339 residues: Glycerol-3-phosphate dehydrogenase [NAD(P)+] (339 aa).

4 residues coordinate NADPH: S14, Y15, H35, and K109. Positions 109, 138, and 140 each coordinate sn-glycerol 3-phosphate. A142 lines the NADPH pocket. Residues K194, D247, S257, R258, and N259 each contribute to the sn-glycerol 3-phosphate site. Residue K194 is the Proton acceptor of the active site. R258 serves as a coordination point for NADPH. The NADPH site is built by V282 and E284.

Belongs to the NAD-dependent glycerol-3-phosphate dehydrogenase family.

It localises to the cytoplasm. It carries out the reaction sn-glycerol 3-phosphate + NAD(+) = dihydroxyacetone phosphate + NADH + H(+). The enzyme catalyses sn-glycerol 3-phosphate + NADP(+) = dihydroxyacetone phosphate + NADPH + H(+). The protein operates within membrane lipid metabolism; glycerophospholipid metabolism. In terms of biological role, catalyzes the reduction of the glycolytic intermediate dihydroxyacetone phosphate (DHAP) to sn-glycerol 3-phosphate (G3P), the key precursor for phospholipid synthesis. In Shewanella pealeana (strain ATCC 700345 / ANG-SQ1), this protein is Glycerol-3-phosphate dehydrogenase [NAD(P)+].